The following is a 30-amino-acid chain: GRRCPRIYMECKRDADCLADCVCLQHGICG.

3 cysteine pairs are disulfide-bonded: Cys4–Cys21, Cys11–Cys23, and Cys17–Cys29.

The protein belongs to the protease inhibitor I7 (squash-type serine protease inhibitor) family.

The protein resides in the secreted. Functionally, inhibits trypsin. This chain is Trypsin inhibitor 1, found in Citrullus lanatus (Watermelon).